Consider the following 189-residue polypeptide: Protein GrpE (189 aa).

Over residues 1–14 (MTEKNEEVVEDKNI) the composition is skewed to basic and acidic residues. Residues 1 to 38 (MTEKNEEVVEDKNISDQTDENLTEEIESEADDLQVEPD) are disordered. The segment covering 17-35 (QTDENLTEEIESEADDLQV) has biased composition (acidic residues).

This sequence belongs to the GrpE family. Homodimer.

It localises to the cytoplasm. In terms of biological role, participates actively in the response to hyperosmotic and heat shock by preventing the aggregation of stress-denatured proteins, in association with DnaK and GrpE. It is the nucleotide exchange factor for DnaK and may function as a thermosensor. Unfolded proteins bind initially to DnaJ; upon interaction with the DnaJ-bound protein, DnaK hydrolyzes its bound ATP, resulting in the formation of a stable complex. GrpE releases ADP from DnaK; ATP binding to DnaK triggers the release of the substrate protein, thus completing the reaction cycle. Several rounds of ATP-dependent interactions between DnaJ, DnaK and GrpE are required for fully efficient folding. This chain is Protein GrpE, found in Leuconostoc mesenteroides subsp. mesenteroides (strain ATCC 8293 / DSM 20343 / BCRC 11652 / CCM 1803 / JCM 6124 / NCDO 523 / NBRC 100496 / NCIMB 8023 / NCTC 12954 / NRRL B-1118 / 37Y).